The following is a 260-amino-acid chain: 3'-5' ssDNA/RNA exonuclease TatD (260 aa).

A divalent metal cation is bound by residues Glu92, His128, and His153.

This sequence belongs to the metallo-dependent hydrolases superfamily. TatD-type hydrolase family. TatD subfamily. Monomer. Requires Mg(2+) as cofactor.

It is found in the cytoplasm. 3'-5' exonuclease that prefers single-stranded DNA and RNA. May play a role in the H(2)O(2)-induced DNA damage repair. The chain is 3'-5' ssDNA/RNA exonuclease TatD from Pectobacterium carotovorum subsp. carotovorum (strain PC1).